Reading from the N-terminus, the 266-residue chain is Undecaprenyl-diphosphatase (266 aa).

A run of 8 helical transmembrane segments spans residues 1–21, 43–63, 81–101, 109–129, 159–179, 183–203, 219–239, and 246–266; these read MVVI…SSTG, FLII…WKDI, LKII…DDII, VLIV…IEVV, LAMI…LLLG, PLAA…ATAL, YLAL…KWFM, and SFAS…VLLY.

The protein belongs to the UppP family.

Its subcellular location is the cell inner membrane. It carries out the reaction di-trans,octa-cis-undecaprenyl diphosphate + H2O = di-trans,octa-cis-undecaprenyl phosphate + phosphate + H(+). Functionally, catalyzes the dephosphorylation of undecaprenyl diphosphate (UPP). Confers resistance to bacitracin. In Fusobacterium nucleatum subsp. nucleatum (strain ATCC 25586 / DSM 15643 / BCRC 10681 / CIP 101130 / JCM 8532 / KCTC 2640 / LMG 13131 / VPI 4355), this protein is Undecaprenyl-diphosphatase.